Here is a 389-residue protein sequence, read N- to C-terminus: MDFNLSKELQMLQKEVRNFVNKKIVPFADQWDNENHFPYEEAVRPMGELGFFGTVIPEEYGGEGMDQGWLAAMIVTEEIARGSSALRVQLNMEVLGCAYTILTYGSEALKKKYVPKLSSAEFLGGFGITEPDAGSDVMAMSSTAEDKGDHWLLNGSKTWISNAAQADVLIYYAYTDKAAGSRGLSAFVIEPRNFPGIKTSNLEKLGSHASPTGELFLDNVKVPKENILGKPGDGARIVFGSLNHTRLSAAAGGVGLAQACLDAAIKYCNERRQFGKPIGDFQMNQDMIAQMAVEVEAARLLAYKAAAAKDEGRLNNGLDVAMAKYAAGEAVSKCANYAMRILGAYGYSTEYPVARFYRDAPTYYMVEGSANICKMIIALDQLGVRKANR.

The substrate site is built by arginine 87 and asparagine 91. FAD-binding positions include 126-129 (FGIT), serine 135, and 159-161 (WIS). Serine 135 provides a ligand contact to substrate. Substrate is bound at residue serine 181. Residues arginine 271, 281 to 284 (FQMN), arginine 340, alanine 344, and 367 to 371 (EGSAN) each bind FAD. Glutamate 367 serves as the catalytic Proton acceptor. Arginine 385 contacts substrate.

Belongs to the acyl-CoA dehydrogenase family. Homotetramer. It depends on FAD as a cofactor.

It catalyses the reaction glutaryl-CoA + A = (2E)-glutaconyl-CoA + AH2. Its pathway is aromatic compound metabolism; benzoyl-CoA degradation. Inhibited by glutaconyl-CoA. Its function is as follows. Catalyzes the dehydrogenation of Glutaryl-CoA to glutaconyl-CoA. The polypeptide is Glutaryl-CoA dehydrogenase (Acd) (Desulfococcus multivorans).